The following is a 462-amino-acid chain: MFKTNVEQNNVPVFGSFESGQDLPEKRMNKESVDPRIAYQLVKDQLIDEGSARQNLATFCQTYMEPEAEQIMAETMEKNAIDKSEYPQTAKLESSCVNMLADLWNVDESEHYMGTSTVGSSEACMLGGMAMKFRWRSAALKNGLDIHAKKPSLVISSGYQVCWEKFCVYWDIELREVPMSEEHLSINTDIIMDYVDEYTIGIVGILGITYTGKFDDIMTLNDLVEDYNNTHDNEVVIHVDGASGAMFTPFVEPGLEWDFRLPNVVSINTSGHKYGLVYPGVGWILWRDKEYLPEELVFDVSYLGGHMPTMAINFSRSASQIIGQYYNFLRFGYEGYRQIHMRTRDGALQLSQAVAETGLFEIYNDGANLPIVCYKLKDDANVAWTLYDLADRLQMKGWQVPAYPLPKEMGNTIIQRYVCRGDLGQNMVTAFKNDLSESIEELNNAHILYHDVNTSKTHGFTH.

Residue Lys-273 is modified to N6-(pyridoxal phosphate)lysine.

It belongs to the group II decarboxylase family. Pyridoxal 5'-phosphate is required as a cofactor.

It carries out the reaction L-glutamate + H(+) = 4-aminobutanoate + CO2. Converts internalized glutamate to GABA and increases the internal pH. Involved in glutamate-dependent acid resistance in gastric fluid. The chain is Glutamate decarboxylase alpha (gadA) from Listeria monocytogenes serovar 1/2a (strain ATCC BAA-679 / EGD-e).